Here is a 319-residue protein sequence, read N- to C-terminus: Protein-methionine methyltransferase laeA (319 aa).

The disordered stretch occupies residues 269–293 (REPQSGTCSVQRENGANGDRSTLSA). Over residues 270-293 (EPQSGTCSVQRENGANGDRSTLSA) the composition is skewed to polar residues.

It belongs to the methyltransferase superfamily. LaeA methyltransferase family. In terms of assembly, component of the heterotrimeric velvet complex composed of laeA, veA and velB; VeA acting as a bridging protein between laeA and velB.

It is found in the nucleus. The enzyme catalyses L-methionyl-[protein] + S-adenosyl-L-methionine = S-methyl-L-methionyl-[protein] + S-adenosyl-L-homocysteine. Functionally, methyltransferase; component of the velvet transcription factor complex that acts as a global regulator for secondary metabolite gene expression. Controls the expression of the chaetoglobosin A biosynthesis cluster via the cheR transcription factor and the subsequent production of chaetoglobosin A. Positively regulates the expression of smtA and negatively regulates the expression of velB. LaeA also regulates pigmentation and spores production. This is Protein-methionine methyltransferase laeA from Chaetomium globosum (strain ATCC 6205 / CBS 148.51 / DSM 1962 / NBRC 6347 / NRRL 1970) (Soil fungus).